We begin with the raw amino-acid sequence, 304 residues long: Nucleotide-binding protein ROP_69550 (304 aa).

24 to 31 serves as a coordination point for ATP; sequence GLSGAGLQ. A GTP-binding site is contributed by 75–78; the sequence is DVRS.

The protein belongs to the RapZ-like family.

Its function is as follows. Displays ATPase and GTPase activities. This chain is Nucleotide-binding protein ROP_69550, found in Rhodococcus opacus (strain B4).